A 612-amino-acid polypeptide reads, in one-letter code: Kelch repeat and BTB domain-containing protein 3 (612 aa).

Residues 52 to 119 form the BTB domain; it reads YDFKIIMKDE…AYTGKTKITD (68 aa). The region spanning 150–250 is the BACK domain; it reads NLVNCLQLLS…VRLHQLSEET (101 aa). Kelch repeat units lie at residues 291 to 337, 339 to 390, 400 to 450, 452 to 502, and 548 to 595; these read STTE…GSSL, SYGE…STMK, MALD…PEAS, CQNV…ATLI, and GIED…FYCQ.

The sequence is that of Kelch repeat and BTB domain-containing protein 3 from Pongo abelii (Sumatran orangutan).